The following is a 264-amino-acid chain: Hydroxyethylthiazole kinase (264 aa).

Methionine 52 contacts substrate. ATP-binding residues include arginine 127 and threonine 173. Position 200 (glycine 200) interacts with substrate.

Belongs to the Thz kinase family. Mg(2+) serves as cofactor.

The catalysed reaction is 5-(2-hydroxyethyl)-4-methylthiazole + ATP = 4-methyl-5-(2-phosphooxyethyl)-thiazole + ADP + H(+). Its pathway is cofactor biosynthesis; thiamine diphosphate biosynthesis; 4-methyl-5-(2-phosphoethyl)-thiazole from 5-(2-hydroxyethyl)-4-methylthiazole: step 1/1. Catalyzes the phosphorylation of the hydroxyl group of 4-methyl-5-beta-hydroxyethylthiazole (THZ). In Serratia proteamaculans (strain 568), this protein is Hydroxyethylthiazole kinase.